We begin with the raw amino-acid sequence, 314 residues long: DNA-directed RNA polymerase subunit alpha (314 aa).

Positions 1-228 are alpha N-terminal domain (alpha-NTD); sequence MIEIEKPRIE…EHLNIFVGLT (228 aa). The tract at residues 245-314 is alpha C-terminal domain (alpha-CTD); it reads KEKVLEMSIE…DLGLGLRKED (70 aa).

This sequence belongs to the RNA polymerase alpha chain family. As to quaternary structure, homodimer. The RNAP catalytic core consists of 2 alpha, 1 beta, 1 beta' and 1 omega subunit. When a sigma factor is associated with the core the holoenzyme is formed, which can initiate transcription.

It catalyses the reaction RNA(n) + a ribonucleoside 5'-triphosphate = RNA(n+1) + diphosphate. Functionally, DNA-dependent RNA polymerase catalyzes the transcription of DNA into RNA using the four ribonucleoside triphosphates as substrates. This Staphylococcus haemolyticus (strain JCSC1435) protein is DNA-directed RNA polymerase subunit alpha.